We begin with the raw amino-acid sequence, 193 residues long: Ion-translocating oxidoreductase complex subunit A (193 aa).

6 helical membrane-spanning segments follow: residues 5 to 25 (LLLFVGTVLVNNFVLVKFLGL), 39 to 59 (MGMGLATTFVMTLTSICAWLI), 63 to 83 (ILIPLNLIYLRTLAFILVIAV), 102 to 122 (LLGIFLPLITTNCAVLGVALL), 134 to 154 (ALYGFSAAVGFSLVMVLFAAI), and 171 to 191 (AIALITAGLMSLAFMGFSGLV).

This sequence belongs to the NqrDE/RnfAE family. The complex is composed of six subunits: RsxA, RsxB, RsxC, RsxD, RsxE and RsxG.

It localises to the cell inner membrane. Functionally, part of a membrane-bound complex that couples electron transfer with translocation of ions across the membrane. Required to maintain the reduced state of SoxR. The protein is Ion-translocating oxidoreductase complex subunit A of Shigella flexneri serotype 5b (strain 8401).